Reading from the N-terminus, the 127-residue chain is RxLR effector protein SFI3 (127 aa).

The signal sequence occupies residues 1–20 (MRFLLVAVVAMMALVSSSTA). Positions 40-62 (RSLRNTEERSIAAILAEAGEEDR) match the RxLR-dEER motif. The tract at residues 72–107 (WYKAKLTPTQVKTVLGVSQAEMNNVAKQLQRLYLGY) is WY-domain.

Belongs to the RxLR effector family. As to quaternary structure, forms an unusual trans-homodimer. Interacts with host UBK.

The protein localises to the secreted. The protein resides in the host nucleus. It is found in the host nucleolus. In terms of biological role, effector that suppresses flg22-induced post-translational MAP kinase activation in potato and tomato, but not in Arabidopsis. The perception of highly conserved pathogen- or microbe-associated molecular patterns (PAMPs/MAMPs), such as flg22, triggers converging signaling pathways recruiting MAP kinase cascades and inducing transcriptional re-programming, yielding a generic antimicrobial response. Does not suppress programmed cell death triggered by the P.infestans elicitin infestin-1 (INF1), or by co-expression of tomato Cf4 with Cladosporium fulvum Avr4. Suppresses early pattern-triggered immunity (PTI) via interaction with the U-box-kinase protein UBK, a positive regulator of specific PTI pathways in both potato and Nicotiana benthamiana. The protein is RxLR effector protein SFI3 of Phytophthora infestans (strain T30-4) (Potato late blight agent).